Reading from the N-terminus, the 468-residue chain is WD repeat-containing protein 55 homolog (468 aa).

The tract at residues 1 to 107 (MRNFNSPKFG…VPKRVIDDYD (107 aa)) is disordered. Composition is skewed to acidic residues over residues 15 to 26 (DDSDDDDFDSGT), 41 to 58 (PITE…EYNP), and 67 to 91 (SDDE…DGED). WD repeat units follow at residues 134-173 (KTED…CTIV), 178-217 (THTK…LKRF), 221-259 (AHEE…PVFK), 262-301 (EVED…MYVQ), 304-343 (PYEE…YHCD), and 388-427 (QHSL…EFDD).

This sequence belongs to the WD repeat WDR55 family.

The sequence is that of WD repeat-containing protein 55 homolog from Aedes aegypti (Yellowfever mosquito).